A 369-amino-acid polypeptide reads, in one-letter code: 3 beta-hydroxysteroid dehydrogenase type 7 (369 aa).

The active-site Proton acceptor is Tyr159. Lys163 is an NAD(+) binding site. 2 consecutive transmembrane segments (helical) span residues 289–309 and 312–334; these read LLPYWLLVLLATLNALLQWLL and LVLYTPLLNPYTLAMANTTFTVS.

This sequence belongs to the 3-beta-HSD family. As to expression, predominantly expressed in liver.

The protein localises to the endoplasmic reticulum membrane. It catalyses the reaction 7alpha-hydroxycholesterol + NAD(+) = 7alpha-hydroxycholest-4-en-3-one + NADH + H(+). The enzyme catalyses 7alpha,25-dihydroxycholesterol + NAD(+) = 7alpha,25-dihydroxy-4-cholesten-3-one + NADH + H(+). The catalysed reaction is (25R)-cholest-5-en-3beta,7alpha,26-triol + NAD(+) = (25R)-7alpha,26-dihydroxycholest-4-en-3-one + NADH + H(+). It carries out the reaction (24S)-7alpha-dihydroxycholesterol + NAD(+) = (24S)-7alpha,24-dihydroxycholest-4-en-3-one + NADH + H(+). The protein operates within lipid metabolism; steroid biosynthesis. Functionally, the 3-beta-HSD enzymatic system plays a crucial role in the biosynthesis of all classes of hormonal steroids. HSD VII is active against four 7-alpha-hydroxylated sterols. Does not metabolize several different C(19/21) steroids as substrates. Involved in bile acid synthesis. Plays a key role in cell positioning and movement in lymphoid tissues by mediating degradation of 7-alpha,25-dihydroxycholesterol (7-alpha,25-OHC): 7-alpha,25-OHC acts as a ligand for the G protein-coupled receptor GPR183/EBI2, a chemotactic receptor for a number of lymphoid cells. The polypeptide is 3 beta-hydroxysteroid dehydrogenase type 7 (Mus musculus (Mouse)).